The chain runs to 929 residues: Isoleucine--tRNA ligase (929 aa).

Residues 58-68 (PYANGDIHIGH) carry the 'HIGH' region motif. Glutamate 563 serves as a coordination point for L-isoleucyl-5'-AMP. The 'KMSKS' region motif lies at 605-609 (KMSKS). Lysine 608 serves as a coordination point for ATP. Zn(2+)-binding residues include cysteine 892, cysteine 895, cysteine 912, and cysteine 915.

This sequence belongs to the class-I aminoacyl-tRNA synthetase family. IleS type 1 subfamily. Monomer. Zn(2+) serves as cofactor.

The protein resides in the cytoplasm. It catalyses the reaction tRNA(Ile) + L-isoleucine + ATP = L-isoleucyl-tRNA(Ile) + AMP + diphosphate. Its function is as follows. Catalyzes the attachment of isoleucine to tRNA(Ile). As IleRS can inadvertently accommodate and process structurally similar amino acids such as valine, to avoid such errors it has two additional distinct tRNA(Ile)-dependent editing activities. One activity is designated as 'pretransfer' editing and involves the hydrolysis of activated Val-AMP. The other activity is designated 'posttransfer' editing and involves deacylation of mischarged Val-tRNA(Ile). The protein is Isoleucine--tRNA ligase of Neisseria meningitidis serogroup C / serotype 2a (strain ATCC 700532 / DSM 15464 / FAM18).